The primary structure comprises 485 residues: Ribulose bisphosphate carboxylase large chain (485 aa).

Substrate is bound by residues N124 and T174. K176 acts as the Proton acceptor in catalysis. K178 contacts substrate. Mg(2+) is bound by residues K202, D204, and E205. K202 bears the N6-carboxylysine mark. Residue H294 is the Proton acceptor of the active site. 3 residues coordinate substrate: R295, H327, and S379.

Belongs to the RuBisCO large chain family. Type I subfamily. In terms of assembly, heterohexadecamer of 8 large chains and 8 small chains. The cofactor is Mg(2+).

The enzyme catalyses 2 (2R)-3-phosphoglycerate + 2 H(+) = D-ribulose 1,5-bisphosphate + CO2 + H2O. It catalyses the reaction D-ribulose 1,5-bisphosphate + O2 = 2-phosphoglycolate + (2R)-3-phosphoglycerate + 2 H(+). Its function is as follows. RuBisCO catalyzes two reactions: the carboxylation of D-ribulose 1,5-bisphosphate, the primary event in carbon dioxide fixation, as well as the oxidative fragmentation of the pentose substrate. Both reactions occur simultaneously and in competition at the same active site. The chain is Ribulose bisphosphate carboxylase large chain from Rhodopseudomonas palustris (strain ATCC BAA-98 / CGA009).